The following is a 341-amino-acid chain: MAKITAQLVKELRERTGAGVMDAKKALVEVDGDMDKAVQYLRDKGMAKAAKKADRVAAEGLTGVYVDGNVAAITEVNSETDFVSSNDKFVNLVNAATKTIAEGKPANMEAAEELKMADGTTLAQSFVDATATIGEKIVLRRFALEEKTDDQEFGAYQHNGGQIGVITVLEGADAATAKHLAMHIAAMSPKVISPEELDDDFITDQLAVMNHKIDQDNESRALVNKKPLPYLVYGSEKQLSDEILAKAKEDIKAELKEEGKPEKIWDKIIPGKMQRFIDDNTQVDKQFAVLSQNYIMDDSKTVGEFLKEKGAKLVAFQRYEVGEGIEKKQEDFAAEVREQMK.

Positions 80–83 are involved in Mg(2+) ion dislocation from EF-Tu; it reads TDFV.

It belongs to the EF-Ts family.

Its subcellular location is the cytoplasm. In terms of biological role, associates with the EF-Tu.GDP complex and induces the exchange of GDP to GTP. It remains bound to the aminoacyl-tRNA.EF-Tu.GTP complex up to the GTP hydrolysis stage on the ribosome. The polypeptide is Elongation factor Ts (Lactobacillus gasseri (strain ATCC 33323 / DSM 20243 / BCRC 14619 / CIP 102991 / JCM 1131 / KCTC 3163 / NCIMB 11718 / NCTC 13722 / AM63)).